We begin with the raw amino-acid sequence, 255 residues long: Triosephosphate isomerase (255 aa).

9–11 (NWK) serves as a coordination point for substrate. Residue His-95 is the Electrophile of the active site. Residue Glu-167 is the Proton acceptor of the active site. Substrate is bound by residues Gly-173, Ser-212, and 233 to 234 (GG).

It belongs to the triosephosphate isomerase family. In terms of assembly, homodimer.

It localises to the cytoplasm. The enzyme catalyses D-glyceraldehyde 3-phosphate = dihydroxyacetone phosphate. The protein operates within carbohydrate biosynthesis; gluconeogenesis. It participates in carbohydrate degradation; glycolysis; D-glyceraldehyde 3-phosphate from glycerone phosphate: step 1/1. Functionally, involved in the gluconeogenesis. Catalyzes stereospecifically the conversion of dihydroxyacetone phosphate (DHAP) to D-glyceraldehyde-3-phosphate (G3P). The sequence is that of Triosephosphate isomerase from Pectobacterium atrosepticum (strain SCRI 1043 / ATCC BAA-672) (Erwinia carotovora subsp. atroseptica).